A 537-amino-acid chain; its full sequence is 2-succinyl-5-enolpyruvyl-6-hydroxy-3-cyclohexene-1-carboxylate synthase (537 aa).

This sequence belongs to the TPP enzyme family. MenD subfamily. In terms of assembly, homodimer. Mg(2+) serves as cofactor. It depends on Mn(2+) as a cofactor. Requires thiamine diphosphate as cofactor.

The catalysed reaction is isochorismate + 2-oxoglutarate + H(+) = 5-enolpyruvoyl-6-hydroxy-2-succinyl-cyclohex-3-ene-1-carboxylate + CO2. The protein operates within quinol/quinone metabolism; 1,4-dihydroxy-2-naphthoate biosynthesis; 1,4-dihydroxy-2-naphthoate from chorismate: step 2/7. It functions in the pathway quinol/quinone metabolism; menaquinone biosynthesis. Functionally, catalyzes the thiamine diphosphate-dependent decarboxylation of 2-oxoglutarate and the subsequent addition of the resulting succinic semialdehyde-thiamine pyrophosphate anion to isochorismate to yield 2-succinyl-5-enolpyruvyl-6-hydroxy-3-cyclohexene-1-carboxylate (SEPHCHC). This chain is 2-succinyl-5-enolpyruvyl-6-hydroxy-3-cyclohexene-1-carboxylate synthase, found in Rhodococcus erythropolis (strain PR4 / NBRC 100887).